A 570-amino-acid polypeptide reads, in one-letter code: Peptidyl-prolyl cis-trans isomerase CYP63 (570 aa).

The PPIase cyclophilin-type domain occupies phenylalanine 10 to glutamate 174. A disordered region spans residues alanine 180–aspartate 570. Positions valine 203 to lysine 219 are enriched in basic and acidic residues. Low complexity-rich tracts occupy residues serine 229–aspartate 238 and glutamate 246–serine 259. Residues lysine 262–proline 292 are compositionally biased toward basic residues. A compositionally biased stretch (low complexity) spans serine 297–serine 309. The span at valine 323–lysine 339 shows a compositional bias: basic and acidic residues. At serine 340 the chain carries Phosphoserine. Basic residues predominate over residues serine 340–glutamine 351. Low complexity predominate over residues asparagine 352–valine 365. 2 stretches are compositionally biased toward basic and acidic residues: residues serine 387–valine 397 and serine 437–proline 467. Basic residues predominate over residues arginine 468–threonine 490. The span at aspartate 495–serine 505 shows a compositional bias: basic and acidic residues. A compositionally biased stretch (basic residues) spans serine 509–glutamine 523. Positions serine 546–histidine 555 are enriched in low complexity.

The protein belongs to the cyclophilin-type PPIase family. As to quaternary structure, interacts with SNRNP35, RNU1, SCL28, SCL30, SR30 and SR34. The binding to SR34 is phosphorylation-dependent. As to expression, ubiquitous.

Its subcellular location is the nucleus. The protein resides in the nucleoplasm. It is found in the nucleus speckle. The catalysed reaction is [protein]-peptidylproline (omega=180) = [protein]-peptidylproline (omega=0). Functionally, PPIases accelerate the folding of proteins. It catalyzes the cis-trans isomerization of proline imidic peptide bonds in oligopeptides. May be implicated in the folding, transport, and assembly of proteins. Probably involved in early steps of spliceosomal assembly. This Arabidopsis thaliana (Mouse-ear cress) protein is Peptidyl-prolyl cis-trans isomerase CYP63 (CYP63).